The chain runs to 205 residues: Ribosomal RNA small subunit methyltransferase G (205 aa).

S-adenosyl-L-methionine contacts are provided by residues Gly-71, Phe-76, 120–121 (IE), and Arg-134.

It belongs to the methyltransferase superfamily. RNA methyltransferase RsmG family.

The protein resides in the cytoplasm. The catalysed reaction is guanosine(527) in 16S rRNA + S-adenosyl-L-methionine = N(7)-methylguanosine(527) in 16S rRNA + S-adenosyl-L-homocysteine. Specifically methylates the N7 position of guanine in position 527 of 16S rRNA. The sequence is that of Ribosomal RNA small subunit methyltransferase G from Paramagnetospirillum magneticum (strain ATCC 700264 / AMB-1) (Magnetospirillum magneticum).